The chain runs to 299 residues: 33 kDa chaperonin (299 aa).

Disulfide bonds link cysteine 240-cysteine 242 and cysteine 273-cysteine 276.

The protein belongs to the HSP33 family. Post-translationally, under oxidizing conditions two disulfide bonds are formed involving the reactive cysteines. Under reducing conditions zinc is bound to the reactive cysteines and the protein is inactive.

It localises to the cytoplasm. Functionally, redox regulated molecular chaperone. Protects both thermally unfolding and oxidatively damaged proteins from irreversible aggregation. Plays an important role in the bacterial defense system toward oxidative stress. The protein is 33 kDa chaperonin of Gloeothece citriformis (strain PCC 7424) (Cyanothece sp. (strain PCC 7424)).